We begin with the raw amino-acid sequence, 201 residues long: NAD(P)H quinone oxidoreductase PST2 (201 aa).

Residues 6–192 (VAIIIYSLYH…SIAQQQGEDF (187 aa)) form the Flavodoxin-like domain. FMN contacts are provided by residues 12 to 16 (SLYHH) and 112 to 164 (VFVS…SPWG).

It belongs to the WrbA family. Requires FMN as cofactor.

It is found in the cell membrane. It catalyses the reaction a quinone + NADH + H(+) = a quinol + NAD(+). It carries out the reaction a quinone + NADPH + H(+) = a quinol + NADP(+). Its function is as follows. Flavodoxin-like protein (FLP) that plays a role in cell wall integrity, oxidative stress protection and virulence. FLPs act as NAD(P)H quinone oxidoreductases. Reduces ubiquinone (coenzyme Q), enabling it to serve as an antioxidant in the membrane. In Candida albicans (strain SC5314 / ATCC MYA-2876) (Yeast), this protein is NAD(P)H quinone oxidoreductase PST2.